We begin with the raw amino-acid sequence, 218 residues long: Deoxyribose-phosphate aldolase (218 aa).

The active-site Proton donor/acceptor is the aspartate 92. The active-site Schiff-base intermediate with acetaldehyde is lysine 155. Catalysis depends on lysine 184, which acts as the Proton donor/acceptor.

Belongs to the DeoC/FbaB aldolase family. DeoC type 1 subfamily.

It localises to the cytoplasm. It catalyses the reaction 2-deoxy-D-ribose 5-phosphate = D-glyceraldehyde 3-phosphate + acetaldehyde. Its pathway is carbohydrate degradation; 2-deoxy-D-ribose 1-phosphate degradation; D-glyceraldehyde 3-phosphate and acetaldehyde from 2-deoxy-alpha-D-ribose 1-phosphate: step 2/2. Catalyzes a reversible aldol reaction between acetaldehyde and D-glyceraldehyde 3-phosphate to generate 2-deoxy-D-ribose 5-phosphate. In Clostridium kluyveri (strain NBRC 12016), this protein is Deoxyribose-phosphate aldolase.